The primary structure comprises 83 residues: Large ribosomal subunit protein bL27 (83 aa).

The interval 1 to 20 (MAHKKGASSSRNGRDSNPQY) is disordered. A compositionally biased stretch (polar residues) spans 7 to 19 (ASSSRNGRDSNPQ).

Belongs to the bacterial ribosomal protein bL27 family.

The protein is Large ribosomal subunit protein bL27 of Bifidobacterium animalis subsp. lactis (strain AD011).